The chain runs to 351 residues: MAKIAVFFGGSSTEHSISILTGCFICKTLHTMGHSVKPILLTKDGGWVVPSEYRMSIPFEVSNSPDLFQEEFQKRYGVSRTNQIFSLDADIVFLGLHGGQGEDGTIQGFLEILGIPYTGSGVLASAIAMDKTRANQIFLQSGQKVAPFFEIDKLEYLNSTDAVITKLETLGFPQFLKPVEGGSSVSVYKITNREQLKEKLALIFESDSKVMSQSFLTGIEVSCGVLERYRDGKFKKIALPATEIVPGGEFFDFESKYKQGGSHEITPARISEQEMKRVQELAIAAHRSLGCSGYSRTDFIIVNGEPHILETNTLPGMTETSLIPQQAKAAGISMEEVFSDLIEIGLKRSLY.

The ATP-grasp domain occupies 135 to 343; it reads NQIFLQSGQK…MEEVFSDLIE (209 aa). Residue 167–222 coordinates ATP; it reads LETLGFPQFLKPVEGGSSVSVYKITNREQLKEKLALIFESDSKVMSQSFLTGIEVS. Residues aspartate 298, glutamate 310, and asparagine 312 each contribute to the Mg(2+) site.

The protein belongs to the D-alanine--D-alanine ligase family. The cofactor is Mg(2+). It depends on Mn(2+) as a cofactor.

It localises to the cytoplasm. It carries out the reaction 2 D-alanine + ATP = D-alanyl-D-alanine + ADP + phosphate + H(+). Its pathway is cell wall biogenesis; peptidoglycan biosynthesis. Functionally, cell wall formation. This Leptospira interrogans serogroup Icterohaemorrhagiae serovar Lai (strain 56601) protein is D-alanine--D-alanine ligase.